Reading from the N-terminus, the 471-residue chain is Ribosomal protein uS12 methylthiotransferase RimO (471 aa).

The MTTase N-terminal domain maps to 2 to 122 (IKVSLISLGC…VAPIIQEIYA (121 aa)). Residues Cys11, Cys47, Cys84, Cys166, Cys170, and Cys173 each contribute to the [4Fe-4S] cluster site. Residues 152–395 (LTPKHFAYVK…MALQKQIAAD (244 aa)) enclose the Radical SAM core domain. A TRAM domain is found at 398 to 458 (KTYVGRTLRV…DYDLLALPPG (61 aa)).

Belongs to the methylthiotransferase family. RimO subfamily. [4Fe-4S] cluster serves as cofactor.

It localises to the cytoplasm. It carries out the reaction L-aspartate(89)-[ribosomal protein uS12]-hydrogen + (sulfur carrier)-SH + AH2 + 2 S-adenosyl-L-methionine = 3-methylsulfanyl-L-aspartate(89)-[ribosomal protein uS12]-hydrogen + (sulfur carrier)-H + 5'-deoxyadenosine + L-methionine + A + S-adenosyl-L-homocysteine + 2 H(+). Its function is as follows. Catalyzes the methylthiolation of an aspartic acid residue of ribosomal protein uS12. This Opitutus terrae (strain DSM 11246 / JCM 15787 / PB90-1) protein is Ribosomal protein uS12 methylthiotransferase RimO.